The sequence spans 956 residues: MENMSEQALPHEVNQVAEQHWQRLAEAWPDISEQLTPEQTKELKTIFGLSDFVAEQLCRHPNWIVSLFEGQLSMLARDSFSSELHSILAGANDEEQVKAILRRYRNRQMVRLAWRDFLGYAELNDSLLDLSALAEALIIAARDWLYGQMCQQYGTPCDSEGNPQPLMILGMGKLGGRELNFSSDIDLIFTFPEHGETQGGRRSQDNQQFFIRMGQRLVNLLNQVTVDGFVYRVDMRLRPYGESGPLVVSFSGLEDYYQEQGRDWERYAMVKARALGPWSAYSDELHDMLRPFVYRRYIDFSAIESLRKMKQLITQEVRRRRLTDNIKLGAGGIREVEFVVQSFQLIRGGREPALRQQSLFGAIDTLYKLGQLEYLAVDELKQSYLMLRRVENLLQAIGDQQTQTLPQHLLDWQRLCFALGMAGEAELRTHIESAMAKIHRYFKETVGGQESDEVAEQWTAQLWSLVDDEDAEALLKEHGVEESELWPALKSWRGTVAKRTIGPRGRETLDKLMPWLLQEFIQLPTPTKAFLPVSKVLDQILTRTTYLELLFENPGARQQLVSLCMASPWIGEQLAKFPMLLDELIDPAQLYDTTSLDDYPSELRQYLLRVPEEDMEQQMEALRQFKLSQQLKIAAADVTGVLPVMQVSDHLTFLAEAIIEQVVLQAWQQVSKRHGTPSYLAPEEMGFAVIGYGKAGGLELGYGSDLDLVFLHNYTRDKYPDAQQTNGDRPIDIGHFYLKLAQRILHLFSTRTTSGELYEVDMRLRPSGASGLLVSEIEYFGSYQREEAWTWEHQALVRARFLFGDNRLAARFSELRADVLAMERDKAELAKEVREMRQKMRTHLLKVDEGCFDLKQSPGGIADIEFIAQYLVLANTHDHPELAIWSDNVRIFEVLSELELLPHLSAQHLTQAYCYLRDESHRLTLQQAPGQLPQESVDLHVQRVLAIYEQVLNNGQ.

The interval 1–450 (MENMSEQALP…YFKETVGGQE (450 aa)) is adenylyl removase. An adenylyl transferase region spans residues 456–956 (EQWTAQLWSL…IYEQVLNNGQ (501 aa)).

It belongs to the GlnE family. Requires Mg(2+) as cofactor.

It carries out the reaction [glutamine synthetase]-O(4)-(5'-adenylyl)-L-tyrosine + phosphate = [glutamine synthetase]-L-tyrosine + ADP. It catalyses the reaction [glutamine synthetase]-L-tyrosine + ATP = [glutamine synthetase]-O(4)-(5'-adenylyl)-L-tyrosine + diphosphate. In terms of biological role, involved in the regulation of glutamine synthetase GlnA, a key enzyme in the process to assimilate ammonia. When cellular nitrogen levels are high, the C-terminal adenylyl transferase (AT) inactivates GlnA by covalent transfer of an adenylyl group from ATP to specific tyrosine residue of GlnA, thus reducing its activity. Conversely, when nitrogen levels are low, the N-terminal adenylyl removase (AR) activates GlnA by removing the adenylyl group by phosphorolysis, increasing its activity. The regulatory region of GlnE binds the signal transduction protein PII (GlnB) which indicates the nitrogen status of the cell. In Shewanella loihica (strain ATCC BAA-1088 / PV-4), this protein is Bifunctional glutamine synthetase adenylyltransferase/adenylyl-removing enzyme.